The following is a 181-amino-acid chain: Peptidyl-tRNA hydrolase 2, mitochondrial (181 aa).

Residues 10 to 32 (YLVHPGTLSLAAGVACGMCLGWG) form a helical membrane-spanning segment. Residues Lys-78, Lys-83, Lys-97, Lys-108, Lys-117, and Lys-179 each participate in a glycyl lysine isopeptide (Lys-Gly) (interchain with G-Cter in ubiquitin) cross-link.

It belongs to the PTH2 family. In terms of assembly, monomer. Ubiquitinated by PRKN during mitophagy, leading to its degradation and enhancement of mitophagy. Deubiquitinated by USP30.

Its subcellular location is the mitochondrion outer membrane. It carries out the reaction an N-acyl-L-alpha-aminoacyl-tRNA + H2O = an N-acyl-L-amino acid + a tRNA + H(+). Functionally, peptidyl-tRNA hydrolase which releases tRNAs from the ribosome during protein synthesis. Promotes caspase-independent apoptosis by regulating the function of two transcriptional regulators, AES and TLE1. The protein is Peptidyl-tRNA hydrolase 2, mitochondrial (Ptrh2) of Mus musculus (Mouse).